A 240-amino-acid chain; its full sequence is Proteasome subunit alpha (240 aa).

This sequence belongs to the peptidase T1A family. In terms of assembly, the 20S proteasome core is composed of 14 alpha and 14 beta subunits that assemble into four stacked heptameric rings, resulting in a barrel-shaped structure. The two inner rings, each composed of seven catalytic beta subunits, are sandwiched by two outer rings, each composed of seven alpha subunits. The catalytic chamber with the active sites is on the inside of the barrel. Has a gated structure, the ends of the cylinder being occluded by the N-termini of the alpha-subunits. Is capped at one or both ends by the proteasome regulatory ATPase, PAN.

It is found in the cytoplasm. Its activity is regulated as follows. The formation of the proteasomal ATPase PAN-20S proteasome complex, via the docking of the C-termini of PAN into the intersubunit pockets in the alpha-rings, triggers opening of the gate for substrate entry. Interconversion between the open-gate and close-gate conformations leads to a dynamic regulation of the 20S proteasome proteolysis activity. Component of the proteasome core, a large protease complex with broad specificity involved in protein degradation. This Methanoregula boonei (strain DSM 21154 / JCM 14090 / 6A8) protein is Proteasome subunit alpha.